The primary structure comprises 46 residues: Lantibiotic streptin (46 aa).

A propeptide spanning residues 1–24 (MNNTIKDFDLDLKTNKKDTATPYV) is cleaved from the precursor.

The protein belongs to the type A lantibiotic family. Maturation of lantibiotics involves the enzymatic conversion of Thr, and Ser into dehydrated AA and the formation of thioether bonds with cysteine. This is followed by membrane translocation and cleavage of the modified precursor.

In terms of biological role, lanthionine-containing peptide antibiotic (lantibiotic) active on certain Gram-positive bacteria. The bactericidal activity of lantibiotics is based on depolarization of energized bacterial cytoplasmic membranes, initiated by the formation of aqueous transmembrane pores. This Streptococcus pyogenes serotype M1 protein is Lantibiotic streptin (srtA).